The primary structure comprises 153 residues: NADPH-dependent 7-cyano-7-deazaguanine reductase (153 aa).

Residue cysteine 51 is the Thioimide intermediate of the active site. Aspartate 58 serves as the catalytic Proton donor. Residues 73 to 75 (LES) and 92 to 93 (HE) each bind substrate.

This sequence belongs to the GTP cyclohydrolase I family. QueF type 1 subfamily.

The protein resides in the cytoplasm. It catalyses the reaction 7-aminomethyl-7-carbaguanine + 2 NADP(+) = 7-cyano-7-deazaguanine + 2 NADPH + 3 H(+). Its pathway is tRNA modification; tRNA-queuosine biosynthesis. Functionally, catalyzes the NADPH-dependent reduction of 7-cyano-7-deazaguanine (preQ0) to 7-aminomethyl-7-deazaguanine (preQ1). The polypeptide is NADPH-dependent 7-cyano-7-deazaguanine reductase (Bradyrhizobium diazoefficiens (strain JCM 10833 / BCRC 13528 / IAM 13628 / NBRC 14792 / USDA 110)).